We begin with the raw amino-acid sequence, 311 residues long: MALPIIIDCDPGHDDAIALVLALASPELEVKAITSSAGNQTPDKTLRNVLRMLTLLKRPDIPVAGGAVKPLMRELIIADNVHGESGLDGPALPEPSFAPQSGTAVELMAKTLRESSQPVTIVSTGPQTNVALLLNSHPELHTKIARIVIMGGAMGLGNWTPAAEFNIYVDPEAAEIVFQSGIPVVMAGLDVTHKAQIHAADIERFRAIGNPISTIVAELLDFFMEYHKDEKWGFVGAPLHDPCTIAWLLKPEIFTTVERWVGVETQGKYTQGMTVVDYYFLTGNKPNATVMVDVDRQGFVDLLAERLKFYA.

H240 is a catalytic residue.

This sequence belongs to the IUNH family. RihA subfamily.

In terms of biological role, hydrolyzes cytidine or uridine to ribose and cytosine or uracil, respectively. This Salmonella schwarzengrund (strain CVM19633) protein is Pyrimidine-specific ribonucleoside hydrolase RihA.